The chain runs to 150 residues: FAD synthase (150 aa).

ATP is bound by residues 11–12 (TF), 16–19 (HPGH), Asp-96, and Tyr-124.

This sequence belongs to the archaeal FAD synthase family. In terms of assembly, homodimer. Requires a divalent metal cation as cofactor.

The enzyme catalyses FMN + ATP + H(+) = FAD + diphosphate. It participates in cofactor biosynthesis; FAD biosynthesis; FAD from FMN: step 1/1. Functionally, catalyzes the transfer of the AMP portion of ATP to flavin mononucleotide (FMN) to produce flavin adenine dinucleotide (FAD) coenzyme. This Methanococcus maripaludis (strain DSM 14266 / JCM 13030 / NBRC 101832 / S2 / LL) protein is FAD synthase.